We begin with the raw amino-acid sequence, 258 residues long: NAD(P)H-hydrate epimerase (258 aa).

One can recognise a YjeF N-terminal domain in the interval 15-244 (AFQLDQELMS…RIAKEYGIED (230 aa)). 75 to 79 (NNGGD) serves as a coordination point for (6S)-NADPHX. Residues Asn-76 and Asp-145 each coordinate K(+). (6S)-NADPHX-binding positions include 149–155 (GFSFKPP) and Asp-181. K(+) is bound at residue Ser-184.

The protein belongs to the NnrE/AIBP family. The cofactor is K(+).

Its subcellular location is the cytoplasm. The protein localises to the mitochondrion. The enzyme catalyses (6R)-NADHX = (6S)-NADHX. It carries out the reaction (6R)-NADPHX = (6S)-NADPHX. Catalyzes the epimerization of the S- and R-forms of NAD(P)HX, a damaged form of NAD(P)H that is a result of enzymatic or heat-dependent hydration. This is a prerequisite for the S-specific NAD(P)H-hydrate dehydratase to allow the repair of both epimers of NAD(P)HX. The polypeptide is NAD(P)H-hydrate epimerase (Candida albicans (strain SC5314 / ATCC MYA-2876) (Yeast)).